Reading from the N-terminus, the 262-residue chain is MKNIHQTAVIEDGAIIGDDANIEAYAFVSKDAVLGNNVTIKQGARVLGKTRIGDNSRVFSYAIVGDIPQDISYKDEVDTGVIIGEHATIREFCTINSGTHKGDGITRIGDNAFIMAYSHIAHDCIIGSNVILANNATLAGHVELGDYAVVGGLTPIHQFVRVGESCMVAGASALSQDVVPFCLAEGNRAYIRSLNLVGIRRRFDKEQVEELVRAYKFLFNQGISLKDQANELIAKTSDENVKKMCKFILETTRGIPLAKGRD.

It belongs to the transferase hexapeptide repeat family. LpxA subfamily. Homotrimer.

Its subcellular location is the cytoplasm. It carries out the reaction a (3R)-hydroxyacyl-[ACP] + UDP-N-acetyl-alpha-D-glucosamine = a UDP-3-O-[(3R)-3-hydroxyacyl]-N-acetyl-alpha-D-glucosamine + holo-[ACP]. It participates in glycolipid biosynthesis; lipid IV(A) biosynthesis; lipid IV(A) from (3R)-3-hydroxytetradecanoyl-[acyl-carrier-protein] and UDP-N-acetyl-alpha-D-glucosamine: step 1/6. Its function is as follows. Involved in the biosynthesis of lipid A, a phosphorylated glycolipid that anchors the lipopolysaccharide to the outer membrane of the cell. In Campylobacter concisus (strain 13826), this protein is Acyl-[acyl-carrier-protein]--UDP-N-acetylglucosamine O-acyltransferase.